Reading from the N-terminus, the 321-residue chain is Digestive cysteine proteinase 3 (321 aa).

The signal sequence occupies residues 1–16 (MKVAALFLCGLALATA). A propeptide spans 17-106 (SPSWDHFKTQ…AVFTAEAGPM (90 aa)) (activation peptide). Disulfide bonds link Cys-127–Cys-170, Cys-161–Cys-203, and Cys-261–Cys-310. Cys-130 is a catalytic residue. Catalysis depends on residues His-268 and Asn-288.

The protein belongs to the peptidase C1 family.

Inhibited by E-64, antipain, leupeptin, heavy metal ions, iodoacetic acid, dithionitrobenzene, p-hydroxymercuri-benzoate; activated by mercaptoethanol and dithiothreitol. The polypeptide is Digestive cysteine proteinase 3 (LCP3) (Homarus americanus (American lobster)).